A 259-amino-acid polypeptide reads, in one-letter code: UPF0246 protein VFMJ11_2214 (259 aa).

This sequence belongs to the UPF0246 family.

The protein is UPF0246 protein VFMJ11_2214 of Aliivibrio fischeri (strain MJ11) (Vibrio fischeri).